Reading from the N-terminus, the 717-residue chain is Polyribonucleotide nucleotidyltransferase (717 aa).

Mg(2+)-binding residues include D486 and D492. One can recognise a KH domain in the interval 553–612 (PKIVQLQIDIDKISLVIGSTGKTVKAITDEFEVRVQIEQDGRITLFGTDNLKMQKAKAKI). The 94-residue stretch at 622–715 (GEIYDGIVKK…KFGKIELELA (94 aa)) folds into the S1 motif domain. Residues 650–681 (SNRSRSRDDRYGSDIRHSRYSNRNSRYGRDNR) are disordered. Positions 654–666 (RSRDDRYGSDIRH) are enriched in basic and acidic residues.

This sequence belongs to the polyribonucleotide nucleotidyltransferase family. It depends on Mg(2+) as a cofactor.

The protein localises to the cytoplasm. The catalysed reaction is RNA(n+1) + phosphate = RNA(n) + a ribonucleoside 5'-diphosphate. Functionally, involved in mRNA degradation. Catalyzes the phosphorolysis of single-stranded polyribonucleotides processively in the 3'- to 5'-direction. The protein is Polyribonucleotide nucleotidyltransferase of Borrelia duttonii (strain Ly).